We begin with the raw amino-acid sequence, 160 residues long: SsrA-binding protein (160 aa).

It belongs to the SmpB family.

Its subcellular location is the cytoplasm. In terms of biological role, required for rescue of stalled ribosomes mediated by trans-translation. Binds to transfer-messenger RNA (tmRNA), required for stable association of tmRNA with ribosomes. tmRNA and SmpB together mimic tRNA shape, replacing the anticodon stem-loop with SmpB. tmRNA is encoded by the ssrA gene; the 2 termini fold to resemble tRNA(Ala) and it encodes a 'tag peptide', a short internal open reading frame. During trans-translation Ala-aminoacylated tmRNA acts like a tRNA, entering the A-site of stalled ribosomes, displacing the stalled mRNA. The ribosome then switches to translate the ORF on the tmRNA; the nascent peptide is terminated with the 'tag peptide' encoded by the tmRNA and targeted for degradation. The ribosome is freed to recommence translation, which seems to be the essential function of trans-translation. The sequence is that of SsrA-binding protein from Yersinia enterocolitica serotype O:8 / biotype 1B (strain NCTC 13174 / 8081).